The primary structure comprises 58 residues: Parvalbumin beta 3 (58 aa).

Position 1 is an N-acetylalanine (Ala1). Positions 24–58 constitute an EF-hand domain; the sequence is FNYKTFFKFFAIIDQDHSGFIEEEELKALSDAETK. 6 residues coordinate Ca(2+): Asp37, Asp39, Ser41, Phe43, Glu45, and Glu48.

It belongs to the parvalbumin family.

Its function is as follows. In muscle, parvalbumin is thought to be involved in relaxation after contraction. It binds two calcium ions. The polypeptide is Parvalbumin beta 3 (Merluccius senegalensis (Senegalese hake)).